The chain runs to 217 residues: Ras-related protein RABA2c (217 aa).

GTP contacts are provided by residues 19–27 (GDSGVGKSN), 38–44 (CLESKST), 67–71 (DTAGQ), 125–128 (NKSD), and 155–157 (SAL). The Effector region signature appears at 41–49 (SKSTIGVEF). Positions 195–217 (PGQGTTINVDDTSGGAKRACCSS) are disordered. S-geranylgeranyl cysteine attachment occurs at residues C214 and C215.

Belongs to the small GTPase superfamily. Rab family. Expressed in root tips.

Its subcellular location is the endosome membrane. It is found in the golgi apparatus. The protein localises to the trans-Golgi network membrane. Functionally, intracellular vesicle trafficking and protein transport. The sequence is that of Ras-related protein RABA2c (RABA2C) from Arabidopsis thaliana (Mouse-ear cress).